Consider the following 446-residue polypeptide: Phosphoglucosamine mutase (446 aa).

The Phosphoserine intermediate role is filled by Ser101. The Mg(2+) site is built by Ser101, Asp240, Asp242, and Asp244. A Phosphoserine modification is found at Ser101.

The protein belongs to the phosphohexose mutase family. It depends on Mg(2+) as a cofactor. In terms of processing, activated by phosphorylation.

The catalysed reaction is alpha-D-glucosamine 1-phosphate = D-glucosamine 6-phosphate. In terms of biological role, catalyzes the conversion of glucosamine-6-phosphate to glucosamine-1-phosphate. The protein is Phosphoglucosamine mutase of Pseudomonas putida (strain ATCC 47054 / DSM 6125 / CFBP 8728 / NCIMB 11950 / KT2440).